Here is a 25-residue protein sequence, read N- to C-terminus: Caerin-1.3 (25 aa).

Residue Leu-25 is modified to Leucine amide.

In terms of tissue distribution, expressed by the skin parotoid and/or rostral glands.

It localises to the secreted. In terms of biological role, antibacterial peptide, that adopts an alpha helical conformation which can disrupt bacterial membranes. Each caerin displays a different antimicrobial specificity. This chain is Caerin-1.3, found in Ranoidea caerulea (Green tree frog).